Consider the following 25-residue polypeptide: Xenoposin precursor fragment BM2 (25 aa).

In terms of tissue distribution, expressed by the skin glands.

The protein resides in the secreted. Functionally, antimicrobial peptide. This is Xenoposin precursor fragment BM2 from Xenopus boumbaensis (Mawa clawed frog).